The sequence spans 27 residues: uncharacterized protein (27 aa).

The helical transmembrane segment at 6–26 threads the bilayer; that stretch reads IIVLGALIALLELIRFLLQLL.

The protein belongs to the DinQ family.

Its subcellular location is the cell inner membrane. This is an uncharacterized protein from Escherichia coli (strain K12).